Consider the following 201-residue polypeptide: UPF0056 membrane protein PYRAB13050 (201 aa).

Transmembrane regions (helical) follow at residues 8–28 (FAVL…VPIF), 49–69 (ITVL…FKFF), 73–93 (VDAF…EMLS), 111–131 (VAVI…TTVM), 140–160 (PIVI…LASG), and 181–201 (LILT…AFGI).

The protein belongs to the UPF0056 (MarC) family.

It localises to the cell membrane. The chain is UPF0056 membrane protein PYRAB13050 from Pyrococcus abyssi (strain GE5 / Orsay).